A 473-amino-acid chain; its full sequence is 1-aminocyclopropane-1-carboxylate synthase (473 aa).

Residues 84 to 85 (DY), Tyr-145, and Asp-151 contribute to the substrate site. Lys-273 is subject to N6-(pyridoxal phosphate)lysine.

It belongs to the class-I pyridoxal-phosphate-dependent aminotransferase family. In terms of assembly, homodimer. Pyridoxal 5'-phosphate serves as cofactor.

It carries out the reaction S-adenosyl-L-methionine = 1-aminocyclopropane-1-carboxylate + S-methyl-5'-thioadenosine + H(+). The catalysed reaction is (2S)-2-amino-3-butenoate + H2O = 2-oxobutanoate + NH4(+). It functions in the pathway alkene biosynthesis; ethylene biosynthesis via S-adenosyl-L-methionine; ethylene from S-adenosyl-L-methionine: step 1/2. With respect to regulation, inhibited by L-aminoethoxyvinylglycine (AVG). Inhibited by L-vinylglycine (L-VG). Inhibited by S-methylmethionine through a L-VG ketimine intermediate. Catalyzes the formation of 1-aminocyclopropane-1-carboxylate, a direct precursor of ethylene in higher plants. Also catalyzes the conversion of L-vinylglycine (L-VG) to alpha-ketobutyrate and ammonia. Can use S-methylmethionine as substrate. The chain is 1-aminocyclopropane-1-carboxylate synthase from Malus domestica (Apple).